The chain runs to 387 residues: EP300-interacting inhibitor of differentiation 3 (387 aa).

Residues 1 to 19 are compositionally biased toward basic and acidic residues; that stretch reads MSEEKCSLTGGEEKGEELA. The interval 1–77 is disordered; the sequence is MSEEKCSLTG…SDDLSPEAPC (77 aa). A compositionally biased stretch (acidic residues) spans 32 to 72; sequence EEDDDDDEEALKKEEEEEEEEEEEDEEEEEEGPDSSSDDLS.

Belongs to the NSE4 family. As to quaternary structure, component of the SMC5-SMC6 complex which consists at least of SMC5, SMC6, NSMCE2, NSMCE1, NSMCE4A or EID3 and NSMCE3. NSMCE1, NSMCE4A or EID3 and NSMCE3 probably form a subcomplex that bridges the head domains of the SMC5:SMC6 heterodimer. Homodimer, and heterodimer with EID2. Interacts with the C-terminal region of CREBBP.

The protein localises to the nucleus. Its subcellular location is the cytoplasm. It localises to the chromosome. The protein resides in the telomere. Tissue-specific component of the SMC5-SMC6 complex, a complex involved in repair of DNA double-strand breaks by homologous recombination. The complex may promote sister chromatid homologous recombination by recruiting the SMC1-SMC3 cohesin complex to double-strand breaks. The complex is required for telomere maintenance via recombination and mediates sumoylation of shelterin complex (telosome) components. In terms of biological role, acts as a repressor of nuclear receptor-dependent transcription possibly by interfering with CREBBP-dependent coactivation. May function as a coinhibitor of other CREBBP/EP300-dependent transcription factors. The polypeptide is EP300-interacting inhibitor of differentiation 3 (Rattus norvegicus (Rat)).